The chain runs to 591 residues: Aspartate--tRNA(Asp/Asn) ligase (591 aa).

E176 serves as a coordination point for L-aspartate. The aspartate stretch occupies residues 200-203; it reads QLFK. R222 contacts L-aspartate. ATP is bound by residues 222-224 and Q231; that span reads RDE. H450 is a binding site for L-aspartate. E484 is a binding site for ATP. An L-aspartate-binding site is contributed by R491. 536 to 539 lines the ATP pocket; the sequence is GLDR.

The protein belongs to the class-II aminoacyl-tRNA synthetase family. Type 1 subfamily. As to quaternary structure, homodimer.

Its subcellular location is the cytoplasm. It carries out the reaction tRNA(Asx) + L-aspartate + ATP = L-aspartyl-tRNA(Asx) + AMP + diphosphate. Its function is as follows. Aspartyl-tRNA synthetase with relaxed tRNA specificity since it is able to aspartylate not only its cognate tRNA(Asp) but also tRNA(Asn). Reaction proceeds in two steps: L-aspartate is first activated by ATP to form Asp-AMP and then transferred to the acceptor end of tRNA(Asp/Asn). In Bacillus cereus (strain ATCC 10987 / NRS 248), this protein is Aspartate--tRNA(Asp/Asn) ligase.